The primary structure comprises 1450 residues: DNA-directed RNA polymerase RPB1 homolog (1450 aa).

The protein belongs to the RNA polymerase beta' chain family. As to quaternary structure, part of the viral DNA-directed RNA polymerase that consists of 8 polII-like subunits (RPB1, RPB2, RPB3, RPB5, RPB6, RPB7, RPB9, RPB10), a capping enzyme and a termination factor.

The protein resides in the virion. The catalysed reaction is RNA(n) + a ribonucleoside 5'-triphosphate = RNA(n+1) + diphosphate. In terms of biological role, catalytic component of the DNA-directed RNA polymerase (RNAP) that catalyzes the transcription in the cytoplasm of viral DNA into RNA using the four ribonucleoside triphosphates as substrates. Forms the polymerase active center together with RPB2. Part of the core element with the central large cleft, the clamp element that moves to open and close the cleft and the jaws that are thought to grab the incoming DNA template. The chain is DNA-directed RNA polymerase RPB1 homolog from African swine fever virus (isolate Pig/Kenya/KEN-50/1950) (ASFV).